The following is a 175-amino-acid chain: CDP-archaeol synthase (175 aa).

4 consecutive transmembrane segments (helical) span residues 41 to 61 (GLFSGIFCGFLAGCVEVWLSF), 82 to 102 (LIVVLALASGALFGDMFKSFF), 122 to 142 (FVVGAWVFTYLAAPEWFVSNF), and 150 to 170 (VIIITPLLHLTTNIIGYFIGV).

This sequence belongs to the CDP-archaeol synthase family. Mg(2+) serves as cofactor.

The protein resides in the cell membrane. It carries out the reaction 2,3-bis-O-(geranylgeranyl)-sn-glycerol 1-phosphate + CTP + H(+) = CDP-2,3-bis-O-(geranylgeranyl)-sn-glycerol + diphosphate. The protein operates within membrane lipid metabolism; glycerophospholipid metabolism. Its function is as follows. Catalyzes the formation of CDP-2,3-bis-(O-geranylgeranyl)-sn-glycerol (CDP-archaeol) from 2,3-bis-(O-geranylgeranyl)-sn-glycerol 1-phosphate (DGGGP) and CTP. This reaction is the third ether-bond-formation step in the biosynthesis of archaeal membrane lipids. The sequence is that of CDP-archaeol synthase from Methanosarcina mazei (strain ATCC BAA-159 / DSM 3647 / Goe1 / Go1 / JCM 11833 / OCM 88) (Methanosarcina frisia).